The following is a 411-amino-acid chain: S-inosyl-L-homocysteine hydrolase (411 aa).

The substrate site is built by D121 and E146. 147 to 149 provides a ligand contact to NAD(+); the sequence is TTT. Substrate is bound by residues K176 and D180. NAD(+) is bound by residues N181, 210-215, E233, N268, 289-291, and N335; these read GYGWCG and SGH.

This sequence belongs to the adenosylhomocysteinase family. It depends on NAD(+) as a cofactor.

Its subcellular location is the cytoplasm. The catalysed reaction is S-inosyl-L-homocysteine + H2O = L-homocysteine + inosine. Its pathway is amino-acid biosynthesis; S-adenosyl-L-methionine biosynthesis. In terms of biological role, catalyzes the hydrolysis of S-inosyl-L-homocysteine (SIH) to L-homocysteine (Hcy) and inosine. Likely functions in a S-adenosyl-L-methionine (SAM) recycling pathway from S-adenosyl-L-homocysteine (SAH) produced from SAM-dependent methylation reactions. Can also catalyze the reverse reaction in vitro, i.e. the synthesis of SIH from Hcy and inosine. This chain is S-inosyl-L-homocysteine hydrolase, found in Methanosarcina acetivorans (strain ATCC 35395 / DSM 2834 / JCM 12185 / C2A).